Consider the following 118-residue polypeptide: UPF0342 protein BAMEG_3696 (118 aa).

Belongs to the UPF0342 family.

This chain is UPF0342 protein BAMEG_3696, found in Bacillus anthracis (strain CDC 684 / NRRL 3495).